The sequence spans 380 residues: Cytochrome b (380 aa).

Transmembrane regions (helical) follow at residues 33–53 (FGSL…FLAM), 77–98 (WLIR…YLHI), 113–133 (WNVG…GYVL), and 178–198 (FFAF…IHLL). Heme b-binding residues include His-83 and His-97. Heme b-binding residues include His-182 and His-196. His-201 lines the a ubiquinone pocket. 4 consecutive transmembrane segments (helical) span residues 226–246 (YKDL…ALFS), 288–308 (LGGV…PALH), 320–340 (ITQL…WIGG), and 347–367 (FIII…TLIP).

Belongs to the cytochrome b family. The cytochrome bc1 complex contains 3 respiratory subunits (MT-CYB, CYC1 and UQCRFS1), 2 core proteins (UQCRC1 and UQCRC2) and probably 6 low-molecular weight proteins. The cofactor is heme b.

Its subcellular location is the mitochondrion inner membrane. In terms of biological role, component of the ubiquinol-cytochrome c reductase complex (complex III or cytochrome b-c1 complex) that is part of the mitochondrial respiratory chain. The b-c1 complex mediates electron transfer from ubiquinol to cytochrome c. Contributes to the generation of a proton gradient across the mitochondrial membrane that is then used for ATP synthesis. The polypeptide is Cytochrome b (mt-cyb) (Percopsis transmontana (Sand roller)).